The following is a 385-amino-acid chain: Protein pelota homolog (385 aa).

A Glycyl lysine isopeptide (Lys-Gly) (interchain with G-Cter in SUMO2) cross-link involves residue lysine 162. Serine 374, serine 380, serine 381, and serine 382 each carry phosphoserine.

This sequence belongs to the eukaryotic release factor 1 family. Pelota subfamily. In terms of assembly, component of the Pelota-HBS1L complex, also named Dom34-Hbs1 complex, composed of PELO and HBS1L. Interacts with PINK1. Interacts with ABCE1. Interacts with CNOT4. It depends on a divalent metal cation as a cofactor.

It localises to the cytoplasm. Functionally, component of the Pelota-HBS1L complex, a complex that recognizes stalled ribosomes and triggers the No-Go Decay (NGD) pathway. In the Pelota-HBS1L complex, PELO recognizes ribosomes stalled at the 3' end of an mRNA and engages stalled ribosomes by destabilizing mRNA in the mRNA channel. Following mRNA extraction from stalled ribosomes by the SKI complex, the Pelota-HBS1L complex promotes recruitment of ABCE1, which drives the disassembly of stalled ribosomes, followed by degradation of damaged mRNAs as part of the NGD pathway. As part of the PINK1-regulated signaling, upon mitochondrial damage is recruited to the ribosome/mRNA-ribonucleoprotein complex associated to mitochondrial outer membrane thereby enabling the recruitment of autophagy receptors and induction of mitophagy. This Bos taurus (Bovine) protein is Protein pelota homolog (PELO).